The sequence spans 913 residues: Eukaryotic translation initiation factor 3 subunit C (913 aa).

The disordered stretch occupies residues 1 to 44 (MSRFFTTGSDSESESSLSGEELVTKPVGGNYGKQPLLLSEDEED). The segment covering 8 to 21 (GSDSESESSLSGEE) has biased composition (low complexity). Phosphoserine is present on residues Ser9, Ser11, Ser13, Ser15, Ser16, Ser18, and Ser39. At Lys99 the chain carries N6-acetyllysine. Disordered stretches follow at residues 157–301 (TSYK…GGEW) and 522–542 (QLTP…NEGE). Phosphoserine occurs at positions 166, 178, 181, and 182. A compositionally biased stretch (acidic residues) spans 166–190 (SADEDAEKNEEDSEGSSDEDEDEDG). Residues 199–216 (KKSEAPSGESRKFLKKMD) show a composition bias toward basic and acidic residues. Residues 217 to 232 (DEDEDSEDSEDDEDWD) show a composition bias toward acidic residues. Over residues 261–278 (PTTDEDKKAAEKKREDKA) the composition is skewed to basic and acidic residues. The segment covering 522-531 (QLTPPEGSSK) has biased composition (polar residues). At Thr524 the chain carries Phosphothreonine. Lys643 bears the N6-acetyllysine mark. The PCI domain occupies 673–849 (FHLHINLELL…QTVVMHRTEP (177 aa)). Residues 885–913 (FRDQKDGYRKNEGYMRRGGYRQQQSQTAY) are disordered. Positions 886–899 (RDQKDGYRKNEGYM) are enriched in basic and acidic residues. Ser909 bears the Phosphoserine mark.

In terms of assembly, component of the eukaryotic translation initiation factor 3 (eIF-3) complex, which is composed of 13 subunits: EIF3A, EIF3B, EIF3C, EIF3D, EIF3E, EIF3F, EIF3G, EIF3H, EIF3I, EIF3J, EIF3K, EIF3L and EIF3M. The eIF-3 complex appears to include 3 stable modules: module A is composed of EIF3A, EIF3B, EIF3G and EIF3I; module B is composed of EIF3F, EIF3H, and EIF3M; and module C is composed of EIF3C, EIF3D, EIF3E, EIF3K and EIF3L. EIF3C of module C binds EIF3B of module A and EIF3H of module B, thereby linking the three modules. EIF3J is a labile subunit that binds to the eIF-3 complex via EIF3B. The eIF-3 complex interacts with RPS6KB1 under conditions of nutrient depletion. Mitogenic stimulation leads to binding and activation of a complex composed of MTOR and RPTOR, leading to phosphorylation and release of RPS6KB1 and binding of EIF4B to eIF-3. Identified in a HCV IRES-mediated translation complex, at least composed of EIF3C, IGF2BP1, RPS3 and HCV RNA-replicon. Interacts with ALKBH4, IFIT1 and IFIT2. Interacts with BZW2/5MP1. Post-translationally, phosphorylated. Phosphorylation is enhanced upon serum stimulation.

It is found in the cytoplasm. Its function is as follows. Component of the eukaryotic translation initiation factor 3 (eIF-3) complex, which is required for several steps in the initiation of protein synthesis. The eIF-3 complex associates with the 40S ribosome and facilitates the recruitment of eIF-1, eIF-1A, eIF-2:GTP:methionyl-tRNAi and eIF-5 to form the 43S pre-initiation complex (43S PIC). The eIF-3 complex stimulates mRNA recruitment to the 43S PIC and scanning of the mRNA for AUG recognition. The eIF-3 complex is also required for disassembly and recycling of post-termination ribosomal complexes and subsequently prevents premature joining of the 40S and 60S ribosomal subunits prior to initiation. The eIF-3 complex specifically targets and initiates translation of a subset of mRNAs involved in cell proliferation, including cell cycling, differentiation and apoptosis, and uses different modes of RNA stem-loop binding to exert either translational activation or repression. This is Eukaryotic translation initiation factor 3 subunit C from Homo sapiens (Human).